Consider the following 205-residue polypeptide: Ribosome maturation factor RimP (205 aa).

Belongs to the RimP family.

The protein localises to the cytoplasm. Its function is as follows. Required for maturation of 30S ribosomal subunits. In Sinorhizobium medicae (strain WSM419) (Ensifer medicae), this protein is Ribosome maturation factor RimP.